Consider the following 446-residue polypeptide: MSTEGGPPPPPPRPPPAPLRRACSPAPGALQAALMSPPPAATLESTSSSSSSSSASCASSSSNSVSASAGACKSAASSGGAGAGSGGTKKATSGLRRPEKPPYSYIALIVMAIQSSPSKRLTLSEIYQFLQARFPFFRGAYQGWKNSVRHNLSLNECFIKLPKGLGRPGKGHYWTIDPASEFMFEEGSFRRRPRGFRRKCQALKPMYHRVVSGLGFGASLLPQGFDFQAPPSAPLGCHGQGGYGGLDMMPAGYDTGAGAPGHAHPHHLHHHHVPHMSPNPGSTYMASCPVPAGPAGVGAAAGGGGGGGDYGPDSSSSPVPSSPAMASAIECHSPYTSPAAHWSSPGASPYLKQPPALTPSSNPAASAGLHPSMSSYSLEQSYLHQNAREDLSVGLPRYQHHSTPVCDRKDFVLNFNGISSFHPSASGSYYHHHHQSVCQDIKPCVM.

A compositionally biased stretch (pro residues) spans 1–18 (MSTEGGPPPPPPRPPPAP). Positions 1–97 (MSTEGGPPPP…TKKATSGLRR (97 aa)) are disordered. The segment covering 45–78 (STSSSSSSSSASCASSSSNSVSASAGACKSAASS) has biased composition (low complexity). A DNA-binding region (fork-head) is located at residues 100–194 (KPPYSYIALI…EEGSFRRRPR (95 aa)). 3 disordered regions span residues 257 to 278 (AGAP…HMSP), 304 to 325 (GGGG…SPAM), and 340 to 371 (AHWS…GLHP). Residues 263 to 274 (AHPHHLHHHHVP) show a composition bias toward basic residues. Low complexity predominate over residues 311–325 (GPDSSSSPVPSSPAM).

As to quaternary structure, interacts with the transcription factors TBP and TFIIB. In terms of tissue distribution, uniquely expressed in the bronchiolar epithelium and in type II pneumocytes.

Its subcellular location is the nucleus. Its function is as follows. Probable transcription activator for a number of lung-specific genes. Mediates up-regulation of the E3 ligase IRF2BPL and drives ubiquitination and degradation of CTNNB1. The chain is Forkhead box protein F2 (Foxf2) from Mus musculus (Mouse).